Consider the following 913-residue polypeptide: Protein ECT2 (913 aa).

An N-acetylalanine modification is found at alanine 2. BRCT domains are found at residues 176-260 and 266-354; these read MLNL…AAVD and FKVP…MYLY. At threonine 359 the chain carries Phosphothreonine; by PKC/PRKCI. Phosphoserine is present on residues serine 367 and serine 370. At threonine 373 the chain carries Phosphothreonine. Serine 376 carries the phosphoserine modification. 2 short sequence motifs (nuclear localization signal) span residues 378 to 382 and 401 to 405; these read RKRRR and PRKRP. 2 disordered regions span residues 389–415 and 427–450; these read QLSRETDLSPFPPRKRPSAEHSLSIGS and IHYGETPKSCAKSSRSSTPVPPKQ. Residue threonine 444 is modified to Phosphothreonine; by CDK1. The 190-residue stretch at 452–641 folds into the DH domain; that stretch reads ARWQVAKELY…KEVMTHINED (190 aa). A Glycyl lysine isopeptide (Lys-Gly) (interchain with G-Cter in SUMO2) cross-link involves residue lysine 611. A PH domain is found at 675 to 794; the sequence is RVETVSLGEH…KMLCRHVANT (120 aa). Phosphoserine is present on residues serine 716 and serine 842. A Phosphothreonine; by CDK1 modification is found at threonine 846. A disordered region spans residues 853-874; it reads MALSSSHSSEGRSPPSSGKLAV. A compositionally biased stretch (low complexity) spans 856–870; the sequence is SSSHSSEGRSPPSSG. Residues serine 861 and serine 865 each carry the phosphoserine modification.

As to quaternary structure, homodimer. Homooligomer. Found in the centralspindlin complex. Interacts with NR1I3. Interacts (Thr-359 phosphorylated form) with PARD6A; the interaction is observed in cancer cells. Interacts (Thr-359 phosphorylated form) with PRKCI; the interaction is observed in cancer cells. Interacts with PKP4; the interaction is observed at the midbody. Interacts with RACGAP1; the interaction is direct, occurs in a microtubule-dependent manner, occurs at anaphase and during cytokinesis, is inhibited in metaphase by phosphorylation of ECT2 on Thr-373 and is stimulated in early anaphase by dephosphorylation of ECT2 probably on Thr-373 through CDK1 activity. Interacts with PLK1; the interaction is stimulated upon its phosphorylation on Thr-444. Interacts with RHOA; the interaction results in allosteric activation of ECT2. Interacts with KIF23, PARD3, PARD6B and PRKCQ. Interacts with NEDD9/HEF1. Post-translationally, phosphorylated by PLK1 in vitro. Hyperphosphorylated during the G2 phase of the cell cycle. Phosphorylation at Thr-373 occurs during the G2/M phase, relieves its auto-inhibition status and stimulates its GEF activity. Phosphorylation at Thr-444 in G2/M phase is required for subsequent binding with PLK1 and Rho exchange activation. Dephosphorylated at the time of cytokinesis. Phosphorylation at Thr-359 is required for its transformation activity in cancer cells. As to expression, highest expression in testis. Also detectable in brain, kidney, liver and spleen.

It localises to the nucleus. It is found in the cytoplasm. Its subcellular location is the cytoskeleton. The protein resides in the spindle. The protein localises to the cleavage furrow. It localises to the midbody. It is found in the cell junction. Its subcellular location is the tight junction. Its activity is regulated as follows. Autoinhibited by the C-terminal PH domain which folds back and binds to the surface of the DH domain, blocking binding of RHOA to the catalytic center of the DH domain. The 2nd BRCT domain is also involved in inhibition, probably by helping to impede RHOA binding. Allosterically activated by binding of activated GTP-bound RHOA to the PH domain which stimulates the release of PH inhibition and promotes the binding of substrate RHOA to the catalytic center. Binding of phosphorylated RACGAP1 to the N-terminal BRCT domain-containing region also releases autoinhibition. In terms of biological role, guanine nucleotide exchange factor (GEF) that catalyzes the exchange of GDP for GTP. Promotes guanine nucleotide exchange on the Rho family members of small GTPases, like RHOA, RHOC, RAC1 and CDC42. Required for signal transduction pathways involved in the regulation of cytokinesis. Component of the centralspindlin complex that serves as a microtubule-dependent and Rho-mediated signaling required for the myosin contractile ring formation during the cell cycle cytokinesis. Regulates the translocation of RHOA from the central spindle to the equatorial region. Plays a role in the control of mitotic spindle assembly; regulates the activation of CDC42 in metaphase for the process of spindle fibers attachment to kinetochores before chromosome congression. Involved in the regulation of epithelial cell polarity; participates in the formation of epithelial tight junctions in a polarity complex PARD3-PARD6-protein kinase PRKCQ-dependent manner. Plays a role in the regulation of neurite outgrowth. Inhibits phenobarbital (PB)-induced NR1I3 nuclear translocation. Stimulates the activity of RAC1 through its association with the oncogenic PARD6A-PRKCI complex in cancer cells, thereby acting to coordinately drive tumor cell proliferation and invasion. Also stimulates genotoxic stress-induced RHOB activity in breast cancer cells leading to their cell death. This is Protein ECT2 (Ect2) from Mus musculus (Mouse).